Consider the following 70-residue polypeptide: uncharacterized protein (70 aa).

A helical membrane pass occupies residues 15–37 (IFAFLLFRLCKFCCVFCCALCNV).

Its subcellular location is the membrane. This is an uncharacterized protein from Dictyostelium discoideum (Social amoeba).